The sequence spans 108 residues: Insulin (108 aa).

The N-terminal stretch at 1-24 (MALWTRLLPLLALLALWAPAPAQA) is a signal peptide. 3 disulfides stabilise this stretch: Cys-31-Cys-94, Cys-43-Cys-107, and Cys-93-Cys-98. Positions 57-85 (EAENPQAGAVELGGGLGGLQALALEGPPQ) are cleaved as a propeptide — c peptide.

It belongs to the insulin family. Heterodimer of a B chain and an A chain linked by two disulfide bonds.

It localises to the secreted. In terms of biological role, insulin decreases blood glucose concentration. It increases cell permeability to monosaccharides, amino acids and fatty acids. It accelerates glycolysis, the pentose phosphate cycle, and glycogen synthesis in liver. The polypeptide is Insulin (INS) (Sus scrofa (Pig)).